The chain runs to 154 residues: Large ribosomal subunit protein uL13 (154 aa).

Belongs to the universal ribosomal protein uL13 family. Part of the 50S ribosomal subunit.

In terms of biological role, this protein is one of the early assembly proteins of the 50S ribosomal subunit, although it is not seen to bind rRNA by itself. It is important during the early stages of 50S assembly. The polypeptide is Large ribosomal subunit protein uL13 (Cereibacter sphaeroides (strain ATCC 17025 / ATH 2.4.3) (Rhodobacter sphaeroides)).